We begin with the raw amino-acid sequence, 759 residues long: Protein zyg-11 homolog A (759 aa).

LRR repeat units lie at residues 204 to 227 (LPRL…LTCK), 235 to 260 (MHYL…CLLH), and 490 to 513 (VTSI…FMAV).

The protein belongs to the zyg-11 family.

In terms of biological role, probably acts as a target recruitment subunit in an E3 ubiquitin ligase complex ZYGA-CUL2-elongin BC. The polypeptide is Protein zyg-11 homolog A (ZYG11A) (Homo sapiens (Human)).